The chain runs to 481 residues: MKANFGKKEGEYSRLVSKSSNKLLNSLWEKKQIPEEGWSEHTLDLFLSWLSSHDTNNRVDMIPVGAGEREGRVLTPLVQRLHSNLTHGIGRSGNLLEIQPKALGSSMLACLSNEFAKHALHLLGLHAVKSCIVVPLCTGMSLSLCMTSWRRRRPKAKYVVWLRIDQKSSLKSIYHAGFEPIIVEPIRDRDSLITDVETVNRIIEQRGEEILCVMTTTSCFAPRSPDNVEAISAICAAHDVPHLVNNAYGLQSEETIRKIAAAHECGRVDAVVQSLDKNFQVPVGGAVIAAFKQNHIQSIAQSYPGRASSVPSRDLVLTLLYQGQSAFLEPFGKQKQMFLKMRRKLISFAENIGECVYEVPENEISSAMTLSTIPPAKQTLFGSILFAKGITGARVVTSSQSKTTIEGCEFINFGSHTTEQHGGYLNIACSVGMTDHELEELFTRLTSSYAKFVRELAKEDERINSSGRRIPINESFDMEND.

Residues 1–36 form a tetramerization region; it reads MKANFGKKEGEYSRLVSKSSNKLLNSLWEKKQIPEE. Arginine 69 provides a ligand contact to pyridoxal 5'-phosphate. Residues 90–100 are phosphate loop (P-loop); the sequence is GRSGNLLEIQP. Arginine 91, serine 92, and glutamine 99 together coordinate substrate. Lysine 277 is modified (N6-(pyridoxal phosphate)lysine). Arginine 306 is a binding site for substrate.

The protein belongs to the SepSecS family. As to quaternary structure, homotetramer formed by a catalytic dimer and a non-catalytic dimer serving as a binding platform that orients tRNASec for catalysis. Each tetramer binds the CCA ends of two tRNAs which point to the active sites of the catalytic dimer. It depends on pyridoxal 5'-phosphate as a cofactor.

Its subcellular location is the cytoplasm. It carries out the reaction O-phospho-L-seryl-tRNA(Sec) + selenophosphate + H2O = L-selenocysteinyl-tRNA(Sec) + 2 phosphate. Its pathway is aminoacyl-tRNA biosynthesis; selenocysteinyl-tRNA(Sec) biosynthesis; selenocysteinyl-tRNA(Sec) from L-seryl-tRNA(Sec) (archaeal/eukaryal route): step 2/2. Functionally, converts O-phosphoseryl-tRNA(Sec) to selenocysteinyl-tRNA(Sec) required for selenoprotein biosynthesis. This is O-phosphoseryl-tRNA(Sec) selenium transferase (secs-1) from Caenorhabditis elegans.